Here is a 258-residue protein sequence, read N- to C-terminus: Na(+)-translocating NADH-quinone reductase subunit C (258 aa).

Residues 14–34 (LIVVLAVSLICSVIVAGAVVG) traverse the membrane as a helical segment. FMN phosphoryl serine is present on Ser226.

Belongs to the NqrC family. As to quaternary structure, composed of six subunits; NqrA, NqrB, NqrC, NqrD, NqrE and NqrF. It depends on FMN as a cofactor.

The protein localises to the cell inner membrane. The catalysed reaction is a ubiquinone + n Na(+)(in) + NADH + H(+) = a ubiquinol + n Na(+)(out) + NAD(+). Its function is as follows. NQR complex catalyzes the reduction of ubiquinone-1 to ubiquinol by two successive reactions, coupled with the transport of Na(+) ions from the cytoplasm to the periplasm. NqrA to NqrE are probably involved in the second step, the conversion of ubisemiquinone to ubiquinol. The protein is Na(+)-translocating NADH-quinone reductase subunit C of Neisseria meningitidis serogroup B (strain ATCC BAA-335 / MC58).